Reading from the N-terminus, the 175-residue chain is Protein her-1 (175 aa).

Positions 1-18 (MRYLPIFVFLGSFGYTET) are cleaved as a signal peptide. Residues Asn-98 and Asn-163 are each glycosylated (N-linked (GlcNAc...) asparagine).

Its subcellular location is the secreted. Dictates male development. Probably plays a direct role in cell signaling during C.elegans sex determination. Inhibits the function of tra-2a. The sequence is that of Protein her-1 (her-1) from Caenorhabditis elegans.